A 303-amino-acid chain; its full sequence is Glycine--tRNA ligase alpha subunit (303 aa).

Belongs to the class-II aminoacyl-tRNA synthetase family. As to quaternary structure, tetramer of two alpha and two beta subunits.

It localises to the cytoplasm. The enzyme catalyses tRNA(Gly) + glycine + ATP = glycyl-tRNA(Gly) + AMP + diphosphate. In Klebsiella pneumoniae (strain 342), this protein is Glycine--tRNA ligase alpha subunit.